A 422-amino-acid chain; its full sequence is Glucose-1-phosphate adenylyltransferase (422 aa).

Residues tyrosine 108, glycine 173, 188–189 (EK), and serine 206 each bind alpha-D-glucose 1-phosphate.

This sequence belongs to the bacterial/plant glucose-1-phosphate adenylyltransferase family. Homotetramer.

It carries out the reaction alpha-D-glucose 1-phosphate + ATP + H(+) = ADP-alpha-D-glucose + diphosphate. It participates in glycan biosynthesis; glycogen biosynthesis. In terms of biological role, involved in the biosynthesis of ADP-glucose, a building block required for the elongation reactions to produce glycogen. Catalyzes the reaction between ATP and alpha-D-glucose 1-phosphate (G1P) to produce pyrophosphate and ADP-Glc. This is Glucose-1-phosphate adenylyltransferase from Paraburkholderia phymatum (strain DSM 17167 / CIP 108236 / LMG 21445 / STM815) (Burkholderia phymatum).